The following is a 1250-amino-acid chain: Myosin-1 (1250 aa).

The interval 1–43 (MGHSRRPAGGEKKSRGFGRSKAAADVGDGRQTGGKPQVKKATF) is disordered. The 680-residue stretch at 51–730 (IGVSDLTLLS…TLFALEAMRD (680 aa)) folds into the Myosin motor domain. 144-151 (GESGAGKT) lines the ATP pocket. S372 is subject to Phosphoserine. The interval 419–501 (SIGILDIYGF…PGVFAALNDA (83 aa)) is actin-binding. IQ domains are found at residues 734–754 (HNMAIRIQRAWRNYLRYRTEC) and 755–780 (AIRIQRFWRRTTGGLEFIKLRDQGHQ). The TH1 domain maps to 788-978 (RRRMSLLGSR…TIHTGPGEPA (191 aa)). Disordered regions lie at residues 962-1079 (DDSY…PKKP) and 1126-1250 (WTPE…DDDW). The span at 1021 to 1035 (AAQPLPRATPQPAAP) shows a compositional bias: pro residues. The span at 1036–1051 (QPAARAVPQPVAAVAA) shows a compositional bias: low complexity. Composition is skewed to pro residues over residues 1064-1077 (APPPPPPAAAPAPK) and 1139-1151 (TPKPAPPPPPPAA). Residues 1076-1137 (PKKPTAKVLY…PEAYLEEQVA (62 aa)) enclose the SH3 domain. Low complexity predominate over residues 1152 to 1170 (PRSTPAPATNGAAAAAKAK). Over residues 1201-1222 (VSMNSHDSSGGSGRGTPNSMSN) the composition is skewed to polar residues. The span at 1223 to 1232 (ASLAGGLAEA) shows a compositional bias: low complexity.

It belongs to the TRAFAC class myosin-kinesin ATPase superfamily. Myosin family. Phosphorylation of the TEDS site (Ser-372) is required for the polarization of the actin cytoskeleton. Phosphorylation probably activates the myosin-I ATPase activity.

Its subcellular location is the cytoplasm. The protein localises to the cytoskeleton. It is found in the actin patch. Type-I myosin implicated in the organization of the actin cytoskeleton. Required for proper actin cytoskeleton polarization. At the cell cortex, assembles in patch-like structures together with proteins from the actin-polymerizing machinery and promotes actin assembly. Functions as actin nucleation-promoting factor (NPF) for the Arp2/3 complex. Plays an important role in polarized growth, spore germination, hyphal morphogenesis, and septal wall formation. In Neosartorya fischeri (strain ATCC 1020 / DSM 3700 / CBS 544.65 / FGSC A1164 / JCM 1740 / NRRL 181 / WB 181) (Aspergillus fischerianus), this protein is Myosin-1 (myoA).